The following is a 640-amino-acid chain: 1,4-alpha-glucan branching enzyme GlgB (640 aa).

Asp-318 (nucleophile) is an active-site residue. The active-site Proton donor is Glu-371.

The protein belongs to the glycosyl hydrolase 13 family. GlgB subfamily. In terms of assembly, monomer.

The catalysed reaction is Transfers a segment of a (1-&gt;4)-alpha-D-glucan chain to a primary hydroxy group in a similar glucan chain.. Its pathway is glycan biosynthesis; glycogen biosynthesis. Its function is as follows. Catalyzes the formation of the alpha-1,6-glucosidic linkages in glycogen by scission of a 1,4-alpha-linked oligosaccharide from growing alpha-1,4-glucan chains and the subsequent attachment of the oligosaccharide to the alpha-1,6 position. This is 1,4-alpha-glucan branching enzyme GlgB from Francisella philomiragia subsp. philomiragia (strain ATCC 25017 / CCUG 19701 / FSC 153 / O#319-036).